The following is a 107-amino-acid chain: Large ribosomal subunit protein uL24 (107 aa).

This sequence belongs to the universal ribosomal protein uL24 family. In terms of assembly, part of the 50S ribosomal subunit.

Its function is as follows. One of two assembly initiator proteins, it binds directly to the 5'-end of the 23S rRNA, where it nucleates assembly of the 50S subunit. Functionally, one of the proteins that surrounds the polypeptide exit tunnel on the outside of the subunit. The chain is Large ribosomal subunit protein uL24 from Malacoplasma penetrans (strain HF-2) (Mycoplasma penetrans).